The sequence spans 559 residues: Nucleoprotein (559 aa).

The interval 53–235 (MRKEKRTDSD…ITQEQSQINI (183 aa)) is binding site for the cap structure m7GTP. The Mn(2+) site is built by aspartate 378 and glutamate 380. Zn(2+)-binding residues include glutamate 388, cysteine 495, histidine 498, and cysteine 519. Aspartate 523 contacts Mn(2+).

The protein belongs to the arenaviridae nucleocapsid protein family. As to quaternary structure, homomultimerizes to form the nucleocapsid. Binds to viral genomic RNA. Interacts with glycoprotein G2. Interacts with protein Z; this interaction probably directs the encapsidated genome to budding sites. Interacts with protein L; this interaction does not interfere with Z-L interaction. Interacts with host IKBKE (via Protein kinase domain); the interaction inhibits IKBKE kinase activity.

Its subcellular location is the virion. The protein resides in the host cytoplasm. Its function is as follows. Encapsidates the genome, protecting it from nucleases. The encapsidated genomic RNA is termed the nucleocapsid (NC). Serves as template for viral transcription and replication. The increased presence of protein N in host cell does not seem to trigger the switch from transcription to replication as observed in other negative strain RNA viruses. Through the interaction with host IKBKE, strongly inhibits the phosphorylation and nuclear translocation of host IRF3, a protein involved in interferon activation pathway, leading to the inhibition of interferon-beta and IRF3-dependent promoters activation. Also encodes a functional 3'-5' exoribonuclease that degrades preferentially dsRNA substrates and thereby participates in the suppression of interferon induction. The polypeptide is Nucleoprotein (Sooretamys angouya (Paraguayan rice rat)).